Reading from the N-terminus, the 151-residue chain is UPF0336 protein Franean1_6066 (151 aa).

A MaoC-like domain is found at 8–127 (VGRSYTSDVP…NEVLVTSYEF (120 aa)).

This sequence belongs to the UPF0336 family.

The polypeptide is UPF0336 protein Franean1_6066 (Parafrankia sp. (strain EAN1pec)).